A 620-amino-acid chain; its full sequence is Protein AFR1 (620 aa).

Over residues 1 to 12 (MEGSYLSAQENQ) the composition is skewed to polar residues. The interval 1–20 (MEGSYLSAQENQPIPERLIP) is disordered. A phosphoserine mark is found at Ser472 and Ser526.

This sequence to yeast YER158C.

Its function is as follows. Acts in conjunction with the alpha-factor receptor to promote morphogenesis and adaptation. The protein is Protein AFR1 (AFR1) of Saccharomyces cerevisiae (strain ATCC 204508 / S288c) (Baker's yeast).